We begin with the raw amino-acid sequence, 550 residues long: Zorya protein ZorA (550 aa).

Transmembrane regions (helical) follow at residues 16–36 (TLIT…AWWC), 52–72 (LMGA…LLNF), and 92–112 (FITS…DAFF).

Belongs to the MotA family.

It is found in the cell inner membrane. In terms of biological role, component of antiviral defense system Zorya type II, composed of ZorA, ZorB and ZorE. Expression of Zorya type II in E.coli (strain MG1655) confers resistance to phages SECphi7 and T7. While most T7 infected Zorya-containing cells undergo abortive infection, a minority produce viable phage progeny. These eventually accumulate to a high multiplicity of infection, leading to culture collapse by 170 minutes after initial infection. ZorA and ZorB probably assemble in the cell inner membrane and exert their effect there. In Escherichia coli (strain ATCC 8739 / DSM 1576 / NBRC 3972 / NCIMB 8545 / WDCM 00012 / Crooks), this protein is Zorya protein ZorA.